We begin with the raw amino-acid sequence, 670 residues long: Probable plastid-lipid-associated protein 14, chloroplastic (670 aa).

The N-terminal 52 residues, methionine 1–serine 52, are a transit peptide targeting the chloroplast. The Protein kinase domain maps to phenylalanine 88–leucine 399.

Belongs to the PAP/fibrillin family. In terms of processing, not autophosphorylated. In terms of tissue distribution, expressed in roots.

The protein resides in the plastid. The protein localises to the chloroplast. Its function is as follows. Directly regulated by DOF3.6/OBP3; unknown function. In Arabidopsis thaliana (Mouse-ear cress), this protein is Probable plastid-lipid-associated protein 14, chloroplastic (PAP14).